The sequence spans 942 residues: Leucine--tRNA ligase (942 aa).

The 'HIGH' region signature appears at 41 to 51 (PYLNGVLHAGH). The short motif at 633–637 (KLSKS) is the 'KMSKS' region element. Lys636 contributes to the ATP binding site.

Belongs to the class-I aminoacyl-tRNA synthetase family.

Its subcellular location is the cytoplasm. The catalysed reaction is tRNA(Leu) + L-leucine + ATP = L-leucyl-tRNA(Leu) + AMP + diphosphate. The polypeptide is Leucine--tRNA ligase (Methanocaldococcus jannaschii (strain ATCC 43067 / DSM 2661 / JAL-1 / JCM 10045 / NBRC 100440) (Methanococcus jannaschii)).